We begin with the raw amino-acid sequence, 231 residues long: Ribosyldihydronicotinamide dehydrogenase [quinone] (231 aa).

FAD-binding positions include H12, 18–21 (FNGS), and 104–107 (LYWF). Residue 127–129 (FDI) coordinates substrate. FAD-binding positions include 148–151 (TTGG) and Y156. The Zn(2+) site is built by H174 and H178. An FAD-binding site is contributed by D194. The residue at position 197 (S197) is a Phosphoserine. Residue R201 participates in FAD binding. C223 serves as a coordination point for Zn(2+).

This sequence belongs to the NAD(P)H dehydrogenase (quinone) family. In terms of assembly, homodimer. Zn(2+) is required as a cofactor. FAD serves as cofactor.

Its subcellular location is the cytoplasm. The catalysed reaction is 1-(beta-D-ribofuranosyl)-1,4-dihydronicotinamide + a quinone + H(+) = beta-nicotinamide D-riboside + a quinol. In terms of biological role, the enzyme apparently serves as a quinone reductase in connection with conjugation reactions of hydroquinones involved in detoxification pathways as well as in biosynthetic processes such as the vitamin K-dependent gamma-carboxylation of glutamate residues in prothrombin synthesis. The polypeptide is Ribosyldihydronicotinamide dehydrogenase [quinone] (Nqo2) (Mus musculus (Mouse)).